A 949-amino-acid chain; its full sequence is Bifunctional uridylyltransferase/uridylyl-removing enzyme (949 aa).

Residues 1–37 (MKETSFWGETPSLSFADDTDKPLSDRTASPPCDPASS) form a disordered region. A uridylyltransferase region spans residues 1–395 (MKETSFWGET…TTGEPPKVVP (395 aa)). The interval 396-756 (GPEEFQTIAG…AYPIPERGVT (361 aa)) is uridylyl-removing. An HD domain is found at 516–632 (VDEHIVEAVR…LDLADTIQSP (117 aa)). ACT domains lie at 757-834 (ELTV…LDIR) and 870-949 (VIEV…TPAS).

The protein belongs to the GlnD family. It depends on Mg(2+) as a cofactor.

The catalysed reaction is [protein-PII]-L-tyrosine + UTP = [protein-PII]-uridylyl-L-tyrosine + diphosphate. The enzyme catalyses [protein-PII]-uridylyl-L-tyrosine + H2O = [protein-PII]-L-tyrosine + UMP + H(+). Its activity is regulated as follows. Uridylyltransferase (UTase) activity is inhibited by glutamine, while glutamine activates uridylyl-removing (UR) activity. Its function is as follows. Modifies, by uridylylation and deuridylylation, the PII regulatory proteins (GlnB and homologs), in response to the nitrogen status of the cell that GlnD senses through the glutamine level. Under low glutamine levels, catalyzes the conversion of the PII proteins and UTP to PII-UMP and PPi, while under higher glutamine levels, GlnD hydrolyzes PII-UMP to PII and UMP (deuridylylation). Thus, controls uridylylation state and activity of the PII proteins, and plays an important role in the regulation of nitrogen assimilation and metabolism. The sequence is that of Bifunctional uridylyltransferase/uridylyl-removing enzyme from Gluconobacter oxydans (strain 621H) (Gluconobacter suboxydans).